The primary structure comprises 145 residues: Transcriptional regulator ZitR (145 aa).

Residues 1–142 (MSLANQIDQF…ISQFLSVLTE (142 aa)) enclose the HTH marR-type domain. Glutamate 23, cysteine 29, glutamate 40, and histidine 41 together coordinate Zn(2+). Positions 53-76 (NARIAEQLKISPAAVTKALKKLQE) form a DNA-binding region, H-T-H motif. The Zn(2+) site is built by glutamate 106, histidine 107, and histidine 111.

Homodimer.

With respect to regulation, zinc acts as a corepressor and is required for DNA-binding activity. Binds up to two zinc ligands per monomer. Inactive under zinc deprivation. In terms of biological role, zinc-responsive regulator that represses expression of the zit operon in the presence of zinc. Acts by binding two palindromic operator sites overlapping the -35 and -10 boxes of the zit promoter. Could be a sensitive sensor of intracellular zinc to efficiently respond to zinc variations in the environment. In Lactococcus lactis subsp. cremoris (strain MG1363), this protein is Transcriptional regulator ZitR (zitR).